A 213-amino-acid chain; its full sequence is Phosphatidylserine decarboxylase proenzyme (213 aa).

S182 (schiff-base intermediate with substrate; via pyruvic acid) is an active-site residue. Position 182 is a pyruvic acid (Ser); by autocatalysis (S182).

It belongs to the phosphatidylserine decarboxylase family. PSD-A subfamily. In terms of assembly, heterodimer of a large membrane-associated beta subunit and a small pyruvoyl-containing alpha subunit. Requires pyruvate as cofactor. Post-translationally, is synthesized initially as an inactive proenzyme. Formation of the active enzyme involves a self-maturation process in which the active site pyruvoyl group is generated from an internal serine residue via an autocatalytic post-translational modification. Two non-identical subunits are generated from the proenzyme in this reaction, and the pyruvate is formed at the N-terminus of the alpha chain, which is derived from the carboxyl end of the proenzyme. The post-translation cleavage follows an unusual pathway, termed non-hydrolytic serinolysis, in which the side chain hydroxyl group of the serine supplies its oxygen atom to form the C-terminus of the beta chain, while the remainder of the serine residue undergoes an oxidative deamination to produce ammonia and the pyruvoyl prosthetic group on the alpha chain.

The protein resides in the cell membrane. The catalysed reaction is a 1,2-diacyl-sn-glycero-3-phospho-L-serine + H(+) = a 1,2-diacyl-sn-glycero-3-phosphoethanolamine + CO2. It functions in the pathway phospholipid metabolism; phosphatidylethanolamine biosynthesis; phosphatidylethanolamine from CDP-diacylglycerol: step 2/2. Its function is as follows. Catalyzes the formation of phosphatidylethanolamine (PtdEtn) from phosphatidylserine (PtdSer). The chain is Phosphatidylserine decarboxylase proenzyme from Chlorobium phaeobacteroides (strain BS1).